A 352-amino-acid chain; its full sequence is Glycerol-1-phosphate dehydrogenase [NAD(P)+] (352 aa).

NAD(+) is bound by residues 99–103 and 121–124; these read GKSID and TVAS. Asp-126 is a substrate binding site. NAD(+) is bound at residue Ser-130. Residue Asp-173 participates in substrate binding. Asp-173 and His-253 together coordinate Zn(2+). His-257 contacts substrate. Residue His-269 coordinates Zn(2+).

Belongs to the glycerol-1-phosphate dehydrogenase family. In terms of assembly, homodimer. Requires Zn(2+) as cofactor.

The protein resides in the cytoplasm. The enzyme catalyses sn-glycerol 1-phosphate + NAD(+) = dihydroxyacetone phosphate + NADH + H(+). It carries out the reaction sn-glycerol 1-phosphate + NADP(+) = dihydroxyacetone phosphate + NADPH + H(+). It participates in membrane lipid metabolism; glycerophospholipid metabolism. Totally inhibited by EDTA in vitro. Functionally, catalyzes the NAD(P)H-dependent reduction of dihydroxyacetonephosphate (DHAP or glycerone phosphate) to glycerol 1-phosphate (G1P). The G1P thus generated is used as the glycerophosphate backbone of phospholipids in the cellular membranes of Archaea. Is also able to catalyze the reverse reaction, i.e. the NAD(+)-dependent oxidation of G1P but not of G3P. Is not active toward glycerol, dihydroxyacetone, glyceraldehyde phosphate, and glycerol-2-phosphate. This Aeropyrum pernix (strain ATCC 700893 / DSM 11879 / JCM 9820 / NBRC 100138 / K1) protein is Glycerol-1-phosphate dehydrogenase [NAD(P)+] (egsA).